The primary structure comprises 302 residues: NAD kinase 2 (302 aa).

The active-site Proton acceptor is aspartate 78. NAD(+) is bound by residues 78-79 (DG), 152-153 (NE), aspartate 182, and 193-198 (TAYSLS).

It belongs to the NAD kinase family. It depends on a divalent metal cation as a cofactor.

The protein resides in the cytoplasm. The catalysed reaction is NAD(+) + ATP = ADP + NADP(+) + H(+). Its function is as follows. Involved in the regulation of the intracellular balance of NAD and NADP, and is a key enzyme in the biosynthesis of NADP. Catalyzes specifically the phosphorylation on 2'-hydroxyl of the adenosine moiety of NAD to yield NADP. This Prochlorococcus marinus (strain NATL2A) protein is NAD kinase 2.